The sequence spans 429 residues: Adenylosuccinate synthetase (429 aa).

GTP is bound by residues glycine 12–lysine 18 and glycine 40–threonine 42. Aspartate 13 acts as the Proton acceptor in catalysis. Positions 13 and 40 each coordinate Mg(2+). IMP is bound by residues aspartate 13 to lysine 16, asparagine 38 to histidine 41, threonine 128, arginine 142, glutamine 223, threonine 238, and arginine 302. Catalysis depends on histidine 41, which acts as the Proton donor. Threonine 298–arginine 304 contacts substrate. GTP is bound by residues arginine 304, cysteine 330–aspartate 332, and serine 412–glycine 414.

The protein belongs to the adenylosuccinate synthetase family. As to quaternary structure, homodimer. Mg(2+) is required as a cofactor.

The protein resides in the cytoplasm. It catalyses the reaction IMP + L-aspartate + GTP = N(6)-(1,2-dicarboxyethyl)-AMP + GDP + phosphate + 2 H(+). It functions in the pathway purine metabolism; AMP biosynthesis via de novo pathway; AMP from IMP: step 1/2. Its function is as follows. Plays an important role in the de novo pathway of purine nucleotide biosynthesis. Catalyzes the first committed step in the biosynthesis of AMP from IMP. The polypeptide is Adenylosuccinate synthetase (Lactiplantibacillus plantarum (strain ATCC BAA-793 / NCIMB 8826 / WCFS1) (Lactobacillus plantarum)).